The sequence spans 554 residues: Dihydroxy-acid dehydratase (554 aa).

Cys-48 is a [2Fe-2S] cluster binding site. A Mg(2+)-binding site is contributed by Asp-80. Cys-121 contributes to the [2Fe-2S] cluster binding site. Residues Asp-122 and Lys-123 each coordinate Mg(2+). Lys-123 carries the N6-carboxylysine modification. Cys-193 is a [2Fe-2S] cluster binding site. Glu-444 lines the Mg(2+) pocket. The Proton acceptor role is filled by Ser-470.

It belongs to the IlvD/Edd family. In terms of assembly, homodimer. It depends on [2Fe-2S] cluster as a cofactor. The cofactor is Mg(2+).

The enzyme catalyses (2R)-2,3-dihydroxy-3-methylbutanoate = 3-methyl-2-oxobutanoate + H2O. It carries out the reaction (2R,3R)-2,3-dihydroxy-3-methylpentanoate = (S)-3-methyl-2-oxopentanoate + H2O. It participates in amino-acid biosynthesis; L-isoleucine biosynthesis; L-isoleucine from 2-oxobutanoate: step 3/4. The protein operates within amino-acid biosynthesis; L-valine biosynthesis; L-valine from pyruvate: step 3/4. Its function is as follows. Functions in the biosynthesis of branched-chain amino acids. Catalyzes the dehydration of (2R,3R)-2,3-dihydroxy-3-methylpentanoate (2,3-dihydroxy-3-methylvalerate) into 2-oxo-3-methylpentanoate (2-oxo-3-methylvalerate) and of (2R)-2,3-dihydroxy-3-methylbutanoate (2,3-dihydroxyisovalerate) into 2-oxo-3-methylbutanoate (2-oxoisovalerate), the penultimate precursor to L-isoleucine and L-valine, respectively. In Tremblaya princeps, this protein is Dihydroxy-acid dehydratase.